The sequence spans 257 residues: tRNA pseudouridine synthase A (257 aa).

The active-site Nucleophile is Asp-52. Tyr-111 serves as a coordination point for substrate.

This sequence belongs to the tRNA pseudouridine synthase TruA family. In terms of assembly, homodimer.

The catalysed reaction is uridine(38/39/40) in tRNA = pseudouridine(38/39/40) in tRNA. Functionally, formation of pseudouridine at positions 38, 39 and 40 in the anticodon stem and loop of transfer RNAs. This chain is tRNA pseudouridine synthase A, found in Cereibacter sphaeroides (strain ATCC 17025 / ATH 2.4.3) (Rhodobacter sphaeroides).